Here is a 312-residue protein sequence, read N- to C-terminus: Methionyl-tRNA formyltransferase (312 aa).

Positions 34-54 (PDAASGRRGKPQPSPVAREAA) are disordered. Residue 110 to 113 (SLLP) coordinates (6S)-5,6,7,8-tetrahydrofolate.

It belongs to the Fmt family.

The catalysed reaction is L-methionyl-tRNA(fMet) + (6R)-10-formyltetrahydrofolate = N-formyl-L-methionyl-tRNA(fMet) + (6S)-5,6,7,8-tetrahydrofolate + H(+). In terms of biological role, attaches a formyl group to the free amino group of methionyl-tRNA(fMet). The formyl group appears to play a dual role in the initiator identity of N-formylmethionyl-tRNA by promoting its recognition by IF2 and preventing the misappropriation of this tRNA by the elongation apparatus. The chain is Methionyl-tRNA formyltransferase from Mycobacterium tuberculosis (strain ATCC 25177 / H37Ra).